A 345-amino-acid polypeptide reads, in one-letter code: Phosphate import ATP-binding protein PstB 2 (345 aa).

The interval 1–57 is disordered; it reads MSDTPQSEPRRSDDRSGADDATAAAAGSTDAAAAAVSSKTGGIAGPPGGPGEVDGDE. Residues 8 to 18 show a composition bias toward basic and acidic residues; the sequence is EPRRSDDRSGA. The span at 19–35 shows a compositional bias: low complexity; sequence DDATAAAAGSTDAAAAA. Over residues 42 to 52 the composition is skewed to gly residues; the sequence is GIAGPPGGPGE. Positions 86-340 constitute an ABC transporter domain; that stretch reads VSVSDLDTYY…PQSQRVEDYV (255 aa). 118–125 is a binding site for ATP; it reads GPSGCGKS.

The protein belongs to the ABC transporter superfamily. Phosphate importer (TC 3.A.1.7) family. In terms of assembly, the complex is composed of two ATP-binding proteins (PstB), two transmembrane proteins (PstC and PstA) and a solute-binding protein (PstS).

The protein resides in the cell membrane. The catalysed reaction is phosphate(out) + ATP + H2O = ADP + 2 phosphate(in) + H(+). Its function is as follows. Part of the ABC transporter complex PstSACB involved in phosphate import. Responsible for energy coupling to the transport system. The polypeptide is Phosphate import ATP-binding protein PstB 2 (Halobacterium salinarum (strain ATCC 700922 / JCM 11081 / NRC-1) (Halobacterium halobium)).